We begin with the raw amino-acid sequence, 238 residues long: Purine nucleoside phosphorylase DeoD-type (238 aa).

A purine D-ribonucleoside is bound at residue His5. Phosphate is bound by residues Gly21, Arg25, Arg44, and 88-91; that span reads RIGS. A purine D-ribonucleoside contacts are provided by residues 180-182 and 204-205; these read EME and SD. The Proton donor role is filled by Asp205.

This sequence belongs to the PNP/UDP phosphorylase family. In terms of assembly, homohexamer; trimer of homodimers.

It carries out the reaction a purine D-ribonucleoside + phosphate = a purine nucleobase + alpha-D-ribose 1-phosphate. It catalyses the reaction a purine 2'-deoxy-D-ribonucleoside + phosphate = a purine nucleobase + 2-deoxy-alpha-D-ribose 1-phosphate. Catalyzes the reversible phosphorolytic breakdown of the N-glycosidic bond in the beta-(deoxy)ribonucleoside molecules, with the formation of the corresponding free purine bases and pentose-1-phosphate. The chain is Purine nucleoside phosphorylase DeoD-type from Xenorhabdus nematophila (strain ATCC 19061 / DSM 3370 / CCUG 14189 / LMG 1036 / NCIMB 9965 / AN6).